The sequence spans 161 residues: MKKIIQFKDNLSSEISEQIKSSKSFIIFEYLGLDAATITKLRKDLFKTGSKLLVLKNNILRRALEKANIKEFGDLVGPNAIVWGTEDEIAPLKEVFNLTKDNECIKIKGSYVEGTFLDAQKTMSIASLPNREGLYSMLLSCLTGPIRGVLYALKAVSETKN.

This sequence belongs to the universal ribosomal protein uL10 family. Part of the ribosomal stalk of the 50S ribosomal subunit. The N-terminus interacts with L11 and the large rRNA to form the base of the stalk. The C-terminus forms an elongated spine to which L12 dimers bind in a sequential fashion forming a multimeric L10(L12)X complex.

In terms of biological role, forms part of the ribosomal stalk, playing a central role in the interaction of the ribosome with GTP-bound translation factors. This Malacoplasma penetrans (strain HF-2) (Mycoplasma penetrans) protein is Large ribosomal subunit protein uL10.